The primary structure comprises 287 residues: Merozoite surface protein 2 (287 aa).

The signal sequence occupies residues 1–20; the sequence is MKVIKTLSIINFFIFVTFNI. Asn22 and Asn36 each carry an N-linked (GlcNAc...) asparagine glycan. The interval 42–248 is disordered; it reads SMTESNPPTG…DSQKECTDGN (207 aa). A polymorphic region region spans residues 44 to 213; it reads TESNPPTGAS…EQTESPELQS (170 aa). The segment covering 54-112 has biased composition (gly residues); the sequence is GSAGGSAGGSAGGSAGGSAGGSAGGSAGGSAGGSAGGSAGGSAGGSAGGSAGSGDGNGA. 12 tandem repeats follow at residues 55–58, 59–62, 63–66, 67–70, 71–74, 75–78, 79–82, 83–86, 87–90, 91–94, 95–98, and 99–102. The segment at 55–102 is 12 X 4 AA tandem repeats of S-A-G-G; the sequence is SAGGSAGGSAGGSAGGSAGGSAGGSAGGSAGGSAGGSAGGSAGGSAGG. Residues 121-149 are compositionally biased toward low complexity; the sequence is SPSTPATTTTTTTTNDAEASTSTSSENPN. 2 stretches are compositionally biased toward polar residues: residues 150-180 and 187-215; these read HNNAETNQANKETQNNSNVQQDSQTKSNVPP and KSPTAQPEQAENSAPTAEQTESPELQSAP. Asn164 is a glycosylation site (N-linked (GlcNAc...) asparagine). N-linked (GlcNAc...) asparagine glycosylation is present at Asn236. The cysteines at positions 244 and 252 are disulfide-linked. N-linked (GlcNAc...) asparagine glycosylation is found at Asn260 and Asn261. A lipid anchor (GPI-anchor amidated asparagine) is attached at Asn261. Positions 262-287 are cleaved as a propeptide — removed in mature form; sequence SSNIASINKFVVLISATLVLSFAIFI.

It is found in the cell membrane. Functionally, may play a role in the merozoite attachment to the erythrocyte. In Plasmodium falciparum (isolate FCR-3 / Gambia), this protein is Merozoite surface protein 2.